A 303-amino-acid polypeptide reads, in one-letter code: Coenzyme PQQ synthesis protein B (303 aa).

The protein belongs to the PqqB family.

It participates in cofactor biosynthesis; pyrroloquinoline quinone biosynthesis. In terms of biological role, may be involved in the transport of PQQ or its precursor to the periplasm. This chain is Coenzyme PQQ synthesis protein B, found in Rhizobium meliloti (strain 1021) (Ensifer meliloti).